The primary structure comprises 161 residues: MSNSSKKHFDLPYRPGVGMMILNADNHIFVGKRIDTKISAWQMPQGGIVPGETPSIAAMREMLEEIGSDKGYIIAESKFWYSYDVPSFLIPKLWNGNFRGQQQRWFLIRFTGNNEDININTSNPEFDQWRWASLDELLSIIIPFKRKLYQAVVKEFESLIQ.

One can recognise a Nudix hydrolase domain in the interval 12–154 (PYRPGVGMMI…KRKLYQAVVK (143 aa)). Positions 46-67 (GGIVPGETPSIAAMREMLEEIG) match the Nudix box motif.

The protein belongs to the Nudix hydrolase family. RppH subfamily. Requires a divalent metal cation as cofactor.

Accelerates the degradation of transcripts by removing pyrophosphate from the 5'-end of triphosphorylated RNA, leading to a more labile monophosphorylated state that can stimulate subsequent ribonuclease cleavage. The polypeptide is RNA pyrophosphohydrolase (Rickettsia africae (strain ESF-5)).